A 366-amino-acid chain; its full sequence is GTP cyclohydrolase 1 type 2 homolog (366 aa).

5 residues coordinate a divalent metal cation: His-64, His-65, Asp-102, His-326, and Glu-329.

Belongs to the GTP cyclohydrolase I type 2/NIF3 family. Homohexamer.

The protein is GTP cyclohydrolase 1 type 2 homolog of Staphylococcus epidermidis (strain ATCC 35984 / DSM 28319 / BCRC 17069 / CCUG 31568 / BM 3577 / RP62A).